Consider the following 156-residue polypeptide: Glutamine--fructose-6-phosphate aminotransferase [isomerizing] (156 aa).

The SIS domain maps to 4–146 (MAHHIVPARD…VLKGTDVDQP (143 aa)). Lys151 (for Fru-6P isomerization activity) is an active-site residue.

As to quaternary structure, homodimer.

It localises to the cytoplasm. The catalysed reaction is D-fructose 6-phosphate + L-glutamine = D-glucosamine 6-phosphate + L-glutamate. Functionally, catalyzes the first step in hexosamine metabolism, converting fructose-6P into glucosamine-6P using glutamine as a nitrogen source. This Sphingobium yanoikuyae (Sphingomonas yanoikuyae) protein is Glutamine--fructose-6-phosphate aminotransferase [isomerizing] (glmS).